The chain runs to 391 residues: MAKEKFERNKPHVNIGTVGHVDHGKTTLTAAITKYFGDFKAYDQIDGAPEEKARGITISTAHVEYETEGRHYAHVDCPGHADYVKNMITGAAQMDGAILVVNAADGPMPQTREHILLARQVGVPALVVFMNKVDQVDDEELLELVEMEIRELLSSYDFPGDDIPIIAGSALAAMEGRDPEIGENKIKELMAAVDEYIPTPERAVDQPFLMPIEDVFSISGRGTVVTGRVERGVINVGDNIEIVGIKDTTTTTCTGVEMFRKLLDRGEAGDNIGALLRGIDREAVERGQVLCKPGSVTPHTKFEAEAYILTKEEGGRHTPFFANYRPQFYFRTTDVTGTVTLPEGTEMVMPGDNLKFEVELIAPIAMEDGLRFAIREGGRTVGAGVVSKILA.

Positions 10–201 (KPHVNIGTVG…AVDEYIPTPE (192 aa)) constitute a tr-type G domain. Residues 19–26 (GHVDHGKT) form a G1 region. A GTP-binding site is contributed by 19 to 26 (GHVDHGKT). Thr26 contacts Mg(2+). The G2 stretch occupies residues 55–59 (GITIS). Residues 76 to 79 (DCPG) form a G3 region. GTP is bound by residues 76–80 (DCPGH) and 131–134 (NKVD). The interval 131–134 (NKVD) is G4. The tract at residues 169 to 171 (SAL) is G5.

The protein belongs to the TRAFAC class translation factor GTPase superfamily. Classic translation factor GTPase family. EF-Tu/EF-1A subfamily. Monomer.

It is found in the cytoplasm. The catalysed reaction is GTP + H2O = GDP + phosphate + H(+). Its function is as follows. GTP hydrolase that promotes the GTP-dependent binding of aminoacyl-tRNA to the A-site of ribosomes during protein biosynthesis. The sequence is that of Elongation factor Tu from Ruegeria sp. (strain TM1040) (Silicibacter sp.).